The primary structure comprises 638 residues: Signal recognition particle receptor subunit alpha (638 aa).

2 disordered regions span residues 132–244 (APTT…GKKA) and 283–316 (GTGS…TKGT). 2 stretches are compositionally biased toward basic and acidic residues: residues 137-146 (KKFEDSEKAK) and 153-165 (IETR…EKAK). At serine 177 the chain carries Phosphoserine. The span at 204–239 (LSKEELIRRKREEFIQKHGRGMEKSNKSTKSDAPKE) shows a compositional bias: basic and acidic residues. A Phosphothreonine modification is found at threonine 284. Residues serine 296, serine 297, and serine 298 each carry the phosphoserine modification. Residues 304–314 (AQNSTKPSATK) show a composition bias toward polar residues. The tract at residues 419-636 (YVVTFCGVNG…NAKAVVAALM (218 aa)) is NG domain. 425 to 432 (GVNGVGKS) lines the GTP pocket. Serine 473 is modified (phosphoserine). 520 to 524 (DTAGR) serves as a coordination point for GTP. A Phosphothreonine modification is found at threonine 578. 588 to 591 (TKFD) provides a ligand contact to GTP.

The protein belongs to the GTP-binding SRP family. Heterodimer with SRPRB. Interacts with the signal recognition particle (SRP) complex subunit SRP54. In terms of assembly, (Microbial infection) May interact with Zika virus strain Mr-766 non-structural protein 4A/NS4A. May interact with Zika virus French Polynesia 10087PF/2013 non-structural protein 4A/NS4A. As to quaternary structure, (Microbial infection) May interact with Dengue virus DENV2 16681 non-structural protein 4A/NS4A.

Its subcellular location is the endoplasmic reticulum membrane. Component of the signal recognition particle (SRP) complex receptor (SR). Ensures, in conjunction with the SRP complex, the correct targeting of the nascent secretory proteins to the endoplasmic reticulum membrane system. Forms a guanosine 5'-triphosphate (GTP)-dependent complex with the SRP subunit SRP54. SRP receptor compaction and GTPase rearrangement drive SRP-mediated cotranslational protein translocation into the ER. In Homo sapiens (Human), this protein is Signal recognition particle receptor subunit alpha.